The chain runs to 144 residues: 3-dehydroquinate dehydratase (144 aa).

Tyr23 acts as the Proton acceptor in catalysis. Residues Asn74, His80, and Asp87 each coordinate substrate. The active-site Proton donor is the His100. Substrate-binding positions include 101 to 102 (LS) and Arg111.

It belongs to the type-II 3-dehydroquinase family. As to quaternary structure, homododecamer.

The enzyme catalyses 3-dehydroquinate = 3-dehydroshikimate + H2O. It functions in the pathway metabolic intermediate biosynthesis; chorismate biosynthesis; chorismate from D-erythrose 4-phosphate and phosphoenolpyruvate: step 3/7. In terms of biological role, catalyzes a trans-dehydration via an enolate intermediate. This chain is 3-dehydroquinate dehydratase, found in Hydrogenovibrio crunogenus (strain DSM 25203 / XCL-2) (Thiomicrospira crunogena).